Reading from the N-terminus, the 189-residue chain is Glycerol-3-phosphate acyltransferase (189 aa).

Transmembrane regions (helical) follow at residues 1-21 (MFWS…AIVL), 50-70 (KLAI…VLLA), 81-101 (AWVG…RFQG), 111-131 (MLMA…VLTF), and 151-171 (LLAW…LMIV).

It belongs to the PlsY family. Probably interacts with PlsX.

It localises to the cell inner membrane. The catalysed reaction is an acyl phosphate + sn-glycerol 3-phosphate = a 1-acyl-sn-glycero-3-phosphate + phosphate. It functions in the pathway lipid metabolism; phospholipid metabolism. Its function is as follows. Catalyzes the transfer of an acyl group from acyl-phosphate (acyl-PO(4)) to glycerol-3-phosphate (G3P) to form lysophosphatidic acid (LPA). This enzyme utilizes acyl-phosphate as fatty acyl donor, but not acyl-CoA or acyl-ACP. The chain is Glycerol-3-phosphate acyltransferase from Pseudomonas entomophila (strain L48).